The primary structure comprises 356 residues: Protein RecA (356 aa).

78–85 (GPESSGKT) is an ATP binding site.

Belongs to the RecA family.

It is found in the cytoplasm. In terms of biological role, can catalyze the hydrolysis of ATP in the presence of single-stranded DNA, the ATP-dependent uptake of single-stranded DNA by duplex DNA, and the ATP-dependent hybridization of homologous single-stranded DNAs. It interacts with LexA causing its activation and leading to its autocatalytic cleavage. In Paracoccus denitrificans, this protein is Protein RecA.